A 117-amino-acid polypeptide reads, in one-letter code: Hainantoxin-XV-3 (117 aa).

The N-terminal stretch at 1 to 20 (MKLCAVIIASLLVCVAVASS) is a signal peptide. The disordered stretch occupies residues 20–55 (SSDNQKEFAQEKEMTREETQSLGEHEKDDEVTGSEE). The propeptide occupies 21–56 (SDNQKEFAQEKEMTREETQSLGEHEKDDEVTGSEER). The segment covering 23-55 (NQKEFAQEKEMTREETQSLGEHEKDDEVTGSEE) has biased composition (basic and acidic residues). 4 disulfides stabilise this stretch: Cys-58-Cys-72, Cys-65-Cys-78, Cys-69-Cys-115, and Cys-71-Cys-91.

The protein belongs to the neurotoxin 03 (Tx2) family. 02 subfamily. HNTX-XV sub-subfamily. As to expression, expressed by the venom gland.

The protein localises to the secreted. Functionally, putative ion channel inhibitor. The chain is Hainantoxin-XV-3 from Cyriopagopus hainanus (Chinese bird spider).